The sequence spans 526 residues: Keratin, type I cytoskeletal 10 (526 aa).

Over residues 1–15 the composition is skewed to low complexity; sequence MSVRYSSSKQYSSSR. The tract at residues 1-29 is disordered; the sequence is MSVRYSSSKQYSSSRSGGGGGGGSSLRIS. Positions 1–126 are head; that stretch reads MSVRYSSSKQ…FGDGGLISGN (126 aa). Phosphoserine occurs at positions 14, 16, 34, 45, 48, and 151. The tract at residues 127 to 162 is coil 1A; the sequence is QKITMQNLNDRLASYLDKVRALEESNYELEVKIKEW. The 315-residue stretch at 127 to 441 folds into the IF rod domain; that stretch reads QKITMQNLND…SLLEGEGSSG (315 aa). The linker 1 stretch occupies residues 163–183; sequence YEKYGNSRQREPRDYSKYYQT. Residues 184 to 275 are coil 1B; it reads IDDLKNQIFN…KNHEEEMRDL (92 aa). Positions 276–298 are linker 12; that stretch reads QNVSTGDVNVEMNAAPGVDLTEL. Positions 299–437 are coil 2; sequence LNNMRSQYEQ…QTYRSLLEGE (139 aa). Positions 438 to 526 are tail; that stretch reads GSSGGGSYGG…GESSSKGPRY (89 aa). A compositionally biased stretch (gly residues) spans 458–505; that stretch reads GGGGYGGGSSSGGYGGGSSSGGGHGGSSGGSYGGGSSSGGGHGGGSSS. The disordered stretch occupies residues 458 to 526; that stretch reads GGGGYGGGSS…GESSSKGPRY (69 aa). Residues 506-526 are compositionally biased toward low complexity; that stretch reads GGHKSTTTGSVGESSSKGPRY.

Belongs to the intermediate filament family. In terms of assembly, heterotetramer of two type I and two type II keratins. Heterodimer with KRT1. Two heterodimers of KRT1 and KRT10 form a heterotetramer. The KRT10 subunit in the heterotetramer is probably disulfide-linked.

It localises to the secreted. Its subcellular location is the extracellular space. It is found in the cell surface. The protein localises to the cytoplasm. Its function is as follows. Plays a role in the establishment of the epidermal barrier on plantar skin. Involved in the maintenance of cell layer development and keratin filament bundles in suprabasal cells of the epithelium. The protein is Keratin, type I cytoskeletal 10 (KRT10) of Bos taurus (Bovine).